We begin with the raw amino-acid sequence, 697 residues long: Elongation factor G (697 aa).

The 283-residue stretch at 8–290 folds into the tr-type G domain; it reads ERYRNFGIMA…AVVDYLPSPL (283 aa). Residues 17–24, 88–92, and 142–145 contribute to the GTP site; these read AHIDAGKT, DTPGH, and NKLD.

This sequence belongs to the TRAFAC class translation factor GTPase superfamily. Classic translation factor GTPase family. EF-G/EF-2 subfamily.

The protein localises to the cytoplasm. Its function is as follows. Catalyzes the GTP-dependent ribosomal translocation step during translation elongation. During this step, the ribosome changes from the pre-translocational (PRE) to the post-translocational (POST) state as the newly formed A-site-bound peptidyl-tRNA and P-site-bound deacylated tRNA move to the P and E sites, respectively. Catalyzes the coordinated movement of the two tRNA molecules, the mRNA and conformational changes in the ribosome. The protein is Elongation factor G of Sphingopyxis alaskensis (strain DSM 13593 / LMG 18877 / RB2256) (Sphingomonas alaskensis).